The chain runs to 87 residues: U3-theraphotoxin-Cg1b (87 aa).

Residues 1–23 (MRTFTLIAILTCAVLVIFHVSAA) form the signal peptide. The propeptide occupies 24–48 (EELEAQDVIQPEDIFTGVATLEEDR). 3 disulfide bridges follow: Cys52/Cys65, Cys56/Cys79, and Cys73/Cys84.

It belongs to the neurotoxin 12 (Hwtx-2) family. 03 (juruin) subfamily. As to expression, expressed by the venom gland.

It is found in the secreted. Probable ion channel inhibitor. The protein is U3-theraphotoxin-Cg1b of Chilobrachys guangxiensis (Chinese earth tiger tarantula).